The chain runs to 208 residues: ATP-dependent Clp protease proteolytic subunit (208 aa).

Catalysis depends on serine 105, which acts as the Nucleophile. Residue histidine 130 is part of the active site.

The protein belongs to the peptidase S14 family. In terms of assembly, fourteen ClpP subunits assemble into 2 heptameric rings which stack back to back to give a disk-like structure with a central cavity, resembling the structure of eukaryotic proteasomes.

It localises to the cytoplasm. It catalyses the reaction Hydrolysis of proteins to small peptides in the presence of ATP and magnesium. alpha-casein is the usual test substrate. In the absence of ATP, only oligopeptides shorter than five residues are hydrolyzed (such as succinyl-Leu-Tyr-|-NHMec, and Leu-Tyr-Leu-|-Tyr-Trp, in which cleavage of the -Tyr-|-Leu- and -Tyr-|-Trp bonds also occurs).. In terms of biological role, cleaves peptides in various proteins in a process that requires ATP hydrolysis. Has a chymotrypsin-like activity. Plays a major role in the degradation of misfolded proteins. The polypeptide is ATP-dependent Clp protease proteolytic subunit (Xanthomonas campestris pv. campestris (strain 8004)).